A 526-amino-acid chain; its full sequence is Probable lipid II flippase MurJ (526 aa).

Helical transmembrane passes span 35-55, 58-78, 96-116, 137-157, 160-180, 190-210, 235-255, 281-301, 313-333, 362-382, 391-411, 415-435, 459-479, and 489-509; these read LMGT…PNLF, LFAE…HYSM, AIFT…ILGA, MFPY…LHSI, FVPS…SMYF, IAAA…QLIF, IIAL…NDLV, LLGI…SFHV, LITA…FVLF, WHSV…AFYA, IAGT…FIPL, GIAF…WMFL, LFSV…AYFF, and GVPL…LLLL.

Belongs to the MurJ/MviN family.

Its subcellular location is the cell inner membrane. Its pathway is cell wall biogenesis; peptidoglycan biosynthesis. Its function is as follows. Involved in peptidoglycan biosynthesis. Transports lipid-linked peptidoglycan precursors from the inner to the outer leaflet of the cytoplasmic membrane. The polypeptide is Probable lipid II flippase MurJ (Treponema pallidum (strain Nichols)).